A 196-amino-acid polypeptide reads, in one-letter code: Elongation factor Ts (196 aa).

Residues 80–83 (TDFV) form an involved in Mg(2+) ion dislocation from EF-Tu region.

The protein belongs to the EF-Ts family.

Its subcellular location is the cytoplasm. In terms of biological role, associates with the EF-Tu.GDP complex and induces the exchange of GDP to GTP. It remains bound to the aminoacyl-tRNA.EF-Tu.GTP complex up to the GTP hydrolysis stage on the ribosome. The chain is Elongation factor Ts from Thermosipho melanesiensis (strain DSM 12029 / CIP 104789 / BI429).